A 99-amino-acid polypeptide reads, in one-letter code: Accessory protein p12I (99 aa).

The SH3-binding signature appears at 4-11; that stretch reads RLLSPLSP. The chain crosses the membrane as a helical span at residues 12–32; it reads LALTALLLFLLSPGEVSGLLL. Positions 33–38 match the SH3-binding motif; the sequence is RPLPAP. A helical membrane pass occupies residues 48–68; sequence ILSNLLFLLFLPLFFSLPLLL. 2 short sequence motifs (SH3-binding) span residues 70–77 and 88–93; these read PSLPITMR and RAPSQP.

The protein belongs to the HTLV-1 accessory protein p12I family. P12I is a homodimer. Interacts with human CANX, CALR, ATP6V0C, IL2RB, IL2RG. Binds to MHC-I heavy chains HLA-A2, HLA-B7 and HLA-Cw4. Ubiquitinated; a fraction of P12I is degraded via the ubiquitin system.

The protein localises to the host endoplasmic reticulum membrane. It is found in the host Golgi apparatus. The protein resides in the host cis-Golgi network membrane. P12I is a modulator of T-lymphocyte proliferation and immune function and may contribute to establish a persistent infection. Binds and down-modulates cell surface expression of interleukin-2 receptors IL2RB and IL2RG. Also down-modulates cell surface MHC-I molecules by binding to free immature MHC-I heavy chains in the ER and targeting them to the proteasome for degradation. Binding to IL2RB mediates recruitment of JAK1 and JAK3. As a result of this interaction, p12I increases DNA-binding and transcriptional activity of STAT5. In Homo sapiens (Human), this protein is Accessory protein p12I.